The sequence spans 173 residues: Lipoprotein signal peptidase (173 aa).

Transmembrane regions (helical) follow at residues 9-29, 37-57, and 70-90; these read LPFLLTAIVIVVDQVTKILVV, VIPVIGDLVNLRFVYNTGAAF, and ILLVFLPFLLLIALTGAYLKS. Active-site residues include aspartate 124 and aspartate 146. A helical membrane pass occupies residues 142-162; the sequence is FNAADSFIVCCGIGLGVNLIL.

Belongs to the peptidase A8 family.

It is found in the cell inner membrane. It catalyses the reaction Release of signal peptides from bacterial membrane prolipoproteins. Hydrolyzes -Xaa-Yaa-Zaa-|-(S,diacylglyceryl)Cys-, in which Xaa is hydrophobic (preferably Leu), and Yaa (Ala or Ser) and Zaa (Gly or Ala) have small, neutral side chains.. It participates in protein modification; lipoprotein biosynthesis (signal peptide cleavage). Functionally, this protein specifically catalyzes the removal of signal peptides from prolipoproteins. This chain is Lipoprotein signal peptidase, found in Treponema denticola (strain ATCC 35405 / DSM 14222 / CIP 103919 / JCM 8153 / KCTC 15104).